We begin with the raw amino-acid sequence, 419 residues long: Protein indeterminate-domain 14 (419 aa).

The disordered stretch occupies residues 1–58 (MIDYERSNTTKNINTHHHNPPPSSSSSDLLPDGNGTAVTQKRKRRPAGTPDPEAEVVS). C2H2-type zinc fingers lie at residues 70–92 (YVCE…RRRH), 112–142 (YVCP…RRKH), and 148–175 (WICE…TRGH). Zn(2+) is bound by residues Cys-150, Cys-153, His-166, Cys-170, Cys-177, Cys-179, His-192, and Cys-196. Residues 175–198 (HSCDCGRVFSRVESFIEHQDTCTV) form a CCHC-type 2; atypical zinc finger. Positions 185 to 197 (RVESFIEHQDTCT) are SHR-binding. 2 disordered regions span residues 200-259 (RSQP…PSTL) and 298-318 (SEVE…EEAR). Low complexity-rich tracts occupy residues 213–230 (QHTT…NNEN) and 246–259 (RRQS…PSTL). Residues 313–349 (EREEARRETKRQIEIAELEFAEAKRIRQHARAELHKA) are a coiled coil.

As to quaternary structure, homo- and heterodimer of IDD14alpha and IDD14beta. In terms of tissue distribution, expressed in cotyledons and the vasculature of reosette leaves. Weak expression in hypocotyls and floral organs, but not detected in roots and inflorescence stems.

It is found in the nucleus. Its function is as follows. Transcription factor regulating starch metabolism by binding directly to the promoter of QQS. The IDD14beta isoform attenuates the transcription factor activity by competitively forming heterodimers with reduced DNA-binding capacity. Regulates lateral organ morphogenesis and gravitropic responses. Has a redundant role with IDD16 in directing leaf and floral organ morphogenesis. Involved in the establishment of auxin gradients through the regulation of auxin biosynthesis and transport. This chain is Protein indeterminate-domain 14, found in Arabidopsis thaliana (Mouse-ear cress).